A 339-amino-acid polypeptide reads, in one-letter code: Ketol-acid reductoisomerase (NADP(+)) (339 aa).

One can recognise a KARI N-terminal Rossmann domain in the interval 1-182 (MRVYYDRDAD…GGGRAGIIET (182 aa)). Residues 24–27 (YGSQ), R48, S51, T53, and 83–86 (DELQ) each bind NADP(+). H108 is a catalytic residue. Residue G134 participates in NADP(+) binding. The KARI C-terminal knotted domain maps to 183 to 328 (TFKEECETDL…AELRAMMPWI (146 aa)). Mg(2+)-binding residues include D191, E195, E227, and E231. S252 is a binding site for substrate.

It belongs to the ketol-acid reductoisomerase family. Mg(2+) is required as a cofactor.

The catalysed reaction is (2R)-2,3-dihydroxy-3-methylbutanoate + NADP(+) = (2S)-2-acetolactate + NADPH + H(+). It carries out the reaction (2R,3R)-2,3-dihydroxy-3-methylpentanoate + NADP(+) = (S)-2-ethyl-2-hydroxy-3-oxobutanoate + NADPH + H(+). Its pathway is amino-acid biosynthesis; L-isoleucine biosynthesis; L-isoleucine from 2-oxobutanoate: step 2/4. It functions in the pathway amino-acid biosynthesis; L-valine biosynthesis; L-valine from pyruvate: step 2/4. Its function is as follows. Involved in the biosynthesis of branched-chain amino acids (BCAA). Catalyzes an alkyl-migration followed by a ketol-acid reduction of (S)-2-acetolactate (S2AL) to yield (R)-2,3-dihydroxy-isovalerate. In the isomerase reaction, S2AL is rearranged via a Mg-dependent methyl migration to produce 3-hydroxy-3-methyl-2-ketobutyrate (HMKB). In the reductase reaction, this 2-ketoacid undergoes a metal-dependent reduction by NADPH to yield (R)-2,3-dihydroxy-isovalerate. The polypeptide is Ketol-acid reductoisomerase (NADP(+)) (Beijerinckia indica subsp. indica (strain ATCC 9039 / DSM 1715 / NCIMB 8712)).